The following is a 303-amino-acid chain: Glycine--tRNA ligase alpha subunit (303 aa).

This sequence belongs to the class-II aminoacyl-tRNA synthetase family. In terms of assembly, tetramer of two alpha and two beta subunits.

It localises to the cytoplasm. It catalyses the reaction tRNA(Gly) + glycine + ATP = glycyl-tRNA(Gly) + AMP + diphosphate. The chain is Glycine--tRNA ligase alpha subunit from Stenotrophomonas maltophilia (strain R551-3).